Here is a 453-residue protein sequence, read N- to C-terminus: GTPase Der (453 aa).

2 EngA-type G domains span residues 4–169 and 178–353; these read PIVA…PPAD and IGVA…EQHR. GTP contacts are provided by residues 10-17, 57-61, 120-123, 184-191, 231-235, and 296-299; these read GRPNVGKS, DTGGL, NKCE, DTAGI, and NKWD. The 86-residue stretch at 354–439 folds into the KH-like domain; it reads RRVGTSVINE…PIRLFWRGKK (86 aa).

Belongs to the TRAFAC class TrmE-Era-EngA-EngB-Septin-like GTPase superfamily. EngA (Der) GTPase family. As to quaternary structure, associates with the 50S ribosomal subunit.

Functionally, GTPase that plays an essential role in the late steps of ribosome biogenesis. The chain is GTPase Der from Synechococcus sp. (strain ATCC 27144 / PCC 6301 / SAUG 1402/1) (Anacystis nidulans).